The sequence spans 506 residues: Protein MGF 505-9R (506 aa).

The protein belongs to the asfivirus MGF 505 family.

Plays a role in virus cell tropism, and may be required for efficient virus replication in macrophages. This is Protein MGF 505-9R from African swine fever virus (isolate Tick/South Africa/Pretoriuskop Pr4/1996) (ASFV).